The chain runs to 456 residues: Exodeoxyribonuclease 7 large subunit (456 aa).

Belongs to the XseA family. In terms of assembly, heterooligomer composed of large and small subunits.

It localises to the cytoplasm. The enzyme catalyses Exonucleolytic cleavage in either 5'- to 3'- or 3'- to 5'-direction to yield nucleoside 5'-phosphates.. Its function is as follows. Bidirectionally degrades single-stranded DNA into large acid-insoluble oligonucleotides, which are then degraded further into small acid-soluble oligonucleotides. The polypeptide is Exodeoxyribonuclease 7 large subunit (Shigella dysenteriae serotype 1 (strain Sd197)).